The chain runs to 157 residues: Transcriptional repressor NrdR (157 aa).

Residues 1-21 are disordered; it reads MKCPHCGNNGSRVVDSRPTDE. The segment at 3–34 is a zinc-finger region; it reads CPHCGNNGSRVVDSRPTDEGRVIRRRRECEKC. The region spanning 49–139 is the ATP-cone domain; the sequence is LLVIKKNGSR…VYRQFKDMHV (91 aa).

It belongs to the NrdR family. Requires Zn(2+) as cofactor.

Its function is as follows. Negatively regulates transcription of bacterial ribonucleotide reductase nrd genes and operons by binding to NrdR-boxes. The protein is Transcriptional repressor NrdR of Pediococcus pentosaceus (strain ATCC 25745 / CCUG 21536 / LMG 10740 / 183-1w).